Here is a 92-residue protein sequence, read N- to C-terminus: Small ribosomal subunit protein uS19 (92 aa).

The protein belongs to the universal ribosomal protein uS19 family.

Its function is as follows. Protein S19 forms a complex with S13 that binds strongly to the 16S ribosomal RNA. This Acidiphilium cryptum (strain JF-5) protein is Small ribosomal subunit protein uS19.